The following is a 96-amino-acid chain: Co-chaperonin GroES (96 aa).

It belongs to the GroES chaperonin family. Heptamer of 7 subunits arranged in a ring. Interacts with the chaperonin GroEL.

It localises to the cytoplasm. Functionally, together with the chaperonin GroEL, plays an essential role in assisting protein folding. The GroEL-GroES system forms a nano-cage that allows encapsulation of the non-native substrate proteins and provides a physical environment optimized to promote and accelerate protein folding. GroES binds to the apical surface of the GroEL ring, thereby capping the opening of the GroEL channel. The polypeptide is Co-chaperonin GroES (Syntrophomonas wolfei subsp. wolfei (strain DSM 2245B / Goettingen)).